Here is a 412-residue protein sequence, read N- to C-terminus: Glucose-1-phosphate adenylyltransferase (412 aa).

Alpha-D-glucose 1-phosphate contacts are provided by residues G163, 179–180, and S197; that span reads EK.

This sequence belongs to the bacterial/plant glucose-1-phosphate adenylyltransferase family. In terms of assembly, homotetramer.

It catalyses the reaction alpha-D-glucose 1-phosphate + ATP + H(+) = ADP-alpha-D-glucose + diphosphate. It participates in glycan biosynthesis; glycogen biosynthesis. In terms of biological role, involved in the biosynthesis of ADP-glucose, a building block required for the elongation reactions to produce glycogen. Catalyzes the reaction between ATP and alpha-D-glucose 1-phosphate (G1P) to produce pyrophosphate and ADP-Glc. This chain is Glucose-1-phosphate adenylyltransferase, found in Frankia casuarinae (strain DSM 45818 / CECT 9043 / HFP020203 / CcI3).